Reading from the N-terminus, the 315-residue chain is L-lactate dehydrogenase (315 aa).

NAD(+) is bound by residues Val14, Asp35, and Tyr66. Substrate-binding positions include Gln83, Arg89, and 121 to 124 (NPVD). NAD(+) is bound by residues 119 to 121 (VAN) and Ser144. 149–152 (DTAR) serves as a coordination point for substrate. His176 functions as the Proton acceptor in the catalytic mechanism. Tyr221 carries the post-translational modification Phosphotyrosine. Substrate is bound at residue Thr230.

This sequence belongs to the LDH/MDH superfamily. LDH family. As to quaternary structure, homotetramer.

The protein localises to the cytoplasm. The catalysed reaction is (S)-lactate + NAD(+) = pyruvate + NADH + H(+). It participates in fermentation; pyruvate fermentation to lactate; (S)-lactate from pyruvate: step 1/1. Functionally, catalyzes the conversion of lactate to pyruvate. In Mesomycoplasma hyopneumoniae (strain 7448) (Mycoplasma hyopneumoniae), this protein is L-lactate dehydrogenase.